A 206-amino-acid chain; its full sequence is uncharacterized protein (206 aa).

This is an uncharacterized protein from Haemophilus influenzae (strain ATCC 51907 / DSM 11121 / KW20 / Rd).